A 454-amino-acid chain; its full sequence is tRNA modification GTPase MnmE (454 aa).

Positions 23, 80, and 120 each coordinate (6S)-5-formyl-5,6,7,8-tetrahydrofolate. The TrmE-type G domain maps to 216–377; that stretch reads GMKVVIAGRP…LRNHLKQSMG (162 aa). N226 provides a ligand contact to K(+). Residues 226–231, 245–251, 270–273, 335–338, and 358–360 contribute to the GTP site; these read NAGKSS, TDIAGTT, DTAG, NKAD, and SAR. Residue S230 coordinates Mg(2+). T245, I247, and T250 together coordinate K(+). T251 contributes to the Mg(2+) binding site. Position 454 (K454) interacts with (6S)-5-formyl-5,6,7,8-tetrahydrofolate.

It belongs to the TRAFAC class TrmE-Era-EngA-EngB-Septin-like GTPase superfamily. TrmE GTPase family. As to quaternary structure, homodimer. Heterotetramer of two MnmE and two MnmG subunits. Requires K(+) as cofactor.

It is found in the cytoplasm. Functionally, exhibits a very high intrinsic GTPase hydrolysis rate. Involved in the addition of a carboxymethylaminomethyl (cmnm) group at the wobble position (U34) of certain tRNAs, forming tRNA-cmnm(5)s(2)U34. The protein is tRNA modification GTPase MnmE of Escherichia coli O139:H28 (strain E24377A / ETEC).